The sequence spans 199 residues: Photosystem I reaction center subunit XI (199 aa).

2 consecutive transmembrane segments (helical) span residues 108–128 (LTAG…LLVL) and 165–185 (FWLG…TLHL).

It belongs to the PsaL family.

The protein resides in the cellular thylakoid membrane. This Prochlorococcus marinus (strain AS9601) protein is Photosystem I reaction center subunit XI.